Consider the following 1029-residue polypeptide: uncharacterized protein (1029 aa).

The span at 1 to 23 shows a compositional bias: basic and acidic residues; the sequence is MREWCMLRESRTNTPRRAAERGK. Residues 1–31 form a disordered region; that stretch reads MREWCMLRESRTNTPRRAAERGKRPGGSSVR. The region spanning 39–168 is the Guanylate cyclase domain; the sequence is TALCYDLVGS…AALAMAARLQ (130 aa). Residue 261 to 268 participates in ATP binding; that stretch reads GDAGIGKS.

This is an uncharacterized protein from Rhizobium meliloti (strain 1021) (Ensifer meliloti).